The chain runs to 445 residues: Argininosuccinate synthase (445 aa).

Residues 17 to 25 and A43 contribute to the ATP site; that span reads AFSGGLDTS. Position 99 (Y99) interacts with L-citrulline. ATP is bound by residues G129 and T131. L-aspartate-binding residues include T131, N135, and D136. N135 is an L-citrulline binding site. D136 lines the ATP pocket. Residues R139 and S192 each contribute to the L-citrulline site. D194 contributes to the ATP binding site. L-citrulline is bound by residues T201, E203, and E280.

It belongs to the argininosuccinate synthase family. Type 2 subfamily. Homotetramer.

Its subcellular location is the cytoplasm. It carries out the reaction L-citrulline + L-aspartate + ATP = 2-(N(omega)-L-arginino)succinate + AMP + diphosphate + H(+). It functions in the pathway amino-acid biosynthesis; L-arginine biosynthesis; L-arginine from L-ornithine and carbamoyl phosphate: step 2/3. This Polaromonas naphthalenivorans (strain CJ2) protein is Argininosuccinate synthase.